The following is a 444-amino-acid chain: Phosphoglucosamine mutase (444 aa).

S100 serves as the catalytic Phosphoserine intermediate. 4 residues coordinate Mg(2+): S100, D240, D242, and D244. Residue S100 is modified to Phosphoserine.

It belongs to the phosphohexose mutase family. Mg(2+) is required as a cofactor. Activated by phosphorylation.

The enzyme catalyses alpha-D-glucosamine 1-phosphate = D-glucosamine 6-phosphate. Functionally, catalyzes the conversion of glucosamine-6-phosphate to glucosamine-1-phosphate. In Desulforamulus reducens (strain ATCC BAA-1160 / DSM 100696 / MI-1) (Desulfotomaculum reducens), this protein is Phosphoglucosamine mutase.